A 382-amino-acid chain; its full sequence is MWSGPPQPDQGLPPPLAAVPVPWKSTDPCQGHRESPGALVETSAGEEAQGQEGPAAAQLDVLRLRSSSMEIREKGSEFLKEELHRAQKELKLKDEECERLSKVREQLEQELEELTASLFEEAHKMVREANMKQAASEKQLKEARGKIDMLQAEVTALKTLVITSTPASPNRELHPQLLSPTKAGPRKGHSRHKSTSSTLCPAVCPAAGHTLTPDREGKEVDTILFAEFQAWRESPTLDKTCPFLERVYREDVGPCLDFTMQELSVLVRAAVEDNTLTIEPVASQTLPTVKVAEVDCSSTNTCALSGLTRTCRHRIRLGDSKSHYYISPSSRARITAVCNFFTYIRYIQQGLVRQDAEPMFWEIMRLRKEMSLAKLGFFPQEA.

Over residues 1 to 17 (MWSGPPQPDQGLPPPLA) the composition is skewed to pro residues. The segment at 1-60 (MWSGPPQPDQGLPPPLAAVPVPWKSTDPCQGHRESPGALVETSAGEEAQGQEGPAAAQLD) is disordered. Over residues 45 to 58 (GEEAQGQEGPAAAQ) the composition is skewed to low complexity. Residues 73–161 (EKGSEFLKEE…AEVTALKTLV (89 aa)) adopt a coiled-coil conformation. The disordered stretch occupies residues 166-198 (PASPNRELHPQLLSPTKAGPRKGHSRHKSTSST). S168 and S179 each carry phosphoserine. Residues 184–194 (GPRKGHSRHKS) are compositionally biased toward basic residues.

The protein belongs to the SEC2 family. As to quaternary structure, interacts with RAB3A and IHPK1 through the coiled-coil domain. This interaction is competitive. IHPK1 kinase activity is not required for this interaction.

In terms of biological role, guanine nucleotide exchange factor (GEF) which may activate RAB3A, a GTPase that regulates synaptic vesicle exocytosis. Promotes the exchange of GDP to GTP, converting inactive GDP-bound Rab proteins into their active GTP-bound form. May also activate RAB8A and RAB8B. The polypeptide is Guanine nucleotide exchange factor for Rab-3A (RAB3IL1) (Homo sapiens (Human)).